A 23-amino-acid chain; its full sequence is Toxin Acra2 (23 aa).

Positions 2 to 23 constitute an LCN-type CS-alpha/beta domain; that stretch reads KDGYIVDSNGCAPECFPTNXGC.

In terms of processing, contains 4 disulfide bonds. In terms of tissue distribution, expressed by the venom gland.

The protein resides in the secreted. Its function is as follows. Excitatory insect toxins induce a spastic paralysis. They bind voltage-independently at site-4 of sodium channels (Nav) and shift the voltage of activation toward more negative potentials thereby affecting sodium channel activation and promoting spontaneous and repetitive firing. Is lethal to mice. Is about 1% of the total protein in the venom. In Androctonus crassicauda (Arabian fat-tailed scorpion), this protein is Toxin Acra2.